Reading from the N-terminus, the 616-residue chain is Cleavage stimulation factor subunit 2 tau variant (616 aa).

In terms of domain architecture, RRM spans 16–94 (RSVFVGNIPY…RALRVDNAAS (79 aa)). 2 disordered regions span residues 203–241 (GKSQ…QPQH) and 262–418 (IPAP…SRAM). Composition is skewed to low complexity over residues 223 to 233 (PGPNVLLNQQN) and 319 to 331 (VTPG…GLLG). Threonine 320 is modified (phosphothreonine). A compositionally biased stretch (basic and acidic residues) spans 368 to 381 (SGHDTRGPSSHEMR). Residues 418–422 (METRA) form a 1-1 repeat. Residues 418 to 462 (METRAMETEVLETRVMERRGMETCAMETRGMEARGMDARGLEMRG) are 9 X 5 AA tandem repeats of M-E-T-R-[AG]. Residues 423–427 (METEV) form a 1-2; approximate repeat. Residues 428-432 (LETRV) form a 1-3; approximate repeat. The stretch at 433–437 (MERRG) is one 1-4; approximate repeat. Residues 438 to 442 (METCA) form a 1-5; approximate repeat. Residues 443-447 (METRG) form a 1-6 repeat. The stretch at 448-452 (MEARG) is one 1-7; approximate repeat. Residues 453–457 (MDARG) form a 1-8; approximate repeat. The 1-9; approximate repeat unit spans residues 458-462 (LEMRG). 4 tandem repeats follow at residues 505–509 (GAGMQ), 510–514 (GTGIQ), 515–519 (GTGMQ), and 520–524 (GAGIQ). The segment at 505 to 549 (GAGMQGTGIQGTGMQGAGIQGGGMQGAGIQGVSIQGGGIQGGGIQ) is 9 X 5 AA tandem repeats of G-[AT]-G-[MI]-Q. The stretch at 525 to 529 (GGGMQ) is one 2-5; approximate repeat. A 2-6 repeat occupies 530-534 (GAGIQ). One copy of the 2-7; approximate repeat lies at 535–539 (GVSIQ). A 2-8; approximate repeat occupies 540–544 (GGGIQ). Residues 542 to 573 (GIQGGGIQGASKQGGSQPSSFSPGQSQVTPQD) form a disordered region. The 2-9; approximate repeat unit spans residues 545–549 (GGGIQ). Residues 550 to 568 (GASKQGGSQPSSFSPGQSQ) show a composition bias toward low complexity. A Phosphoserine modification is found at serine 563.

Its subcellular location is the nucleus. May play a significant role in AAUAAA-independent mRNA polyadenylation in germ cells. Directly involved in the binding to pre-mRNAs. The sequence is that of Cleavage stimulation factor subunit 2 tau variant (CSTF2T) from Homo sapiens (Human).